The sequence spans 78 residues: uncharacterized protein (78 aa).

2 helical membrane passes run 25 to 45 and 50 to 70; these read IITACSHVICVLGIIVGDEVV and KCADIFMIFLVINEPFLFVFV.

The protein localises to the membrane. This is an uncharacterized protein from Saccharomyces cerevisiae (strain ATCC 204508 / S288c) (Baker's yeast).